Consider the following 120-residue polypeptide: MLRFTDEHEWLRLDGDVATVGITAHAAEQLGDLVFVELPKVGAKLTKGEAAAVVESVKAASDVYAPLSGEVTEVNEAAVADPASVGTDPQGGGWLYRLKLDDPSAMDELMDEAAYAAFAK.

The region spanning 17 to 99 (VATVGITAHA…QGGGWLYRLK (83 aa)) is the Lipoyl-binding domain. K58 is subject to N6-lipoyllysine.

The protein belongs to the GcvH family. As to quaternary structure, the glycine cleavage system is composed of four proteins: P, T, L and H. Requires (R)-lipoate as cofactor.

Its function is as follows. The glycine cleavage system catalyzes the degradation of glycine. The H protein shuttles the methylamine group of glycine from the P protein to the T protein. The protein is Glycine cleavage system H protein of Methylorubrum extorquens (strain CM4 / NCIMB 13688) (Methylobacterium extorquens).